Consider the following 337-residue polypeptide: Phosphate acyltransferase (337 aa).

The protein belongs to the PlsX family. In terms of assembly, homodimer. Probably interacts with PlsY.

It is found in the cytoplasm. It carries out the reaction a fatty acyl-[ACP] + phosphate = an acyl phosphate + holo-[ACP]. It participates in lipid metabolism; phospholipid metabolism. Its function is as follows. Catalyzes the reversible formation of acyl-phosphate (acyl-PO(4)) from acyl-[acyl-carrier-protein] (acyl-ACP). This enzyme utilizes acyl-ACP as fatty acyl donor, but not acyl-CoA. This is Phosphate acyltransferase from Polynucleobacter asymbioticus (strain DSM 18221 / CIP 109841 / QLW-P1DMWA-1) (Polynucleobacter necessarius subsp. asymbioticus).